The chain runs to 693 residues: Elongation factor G (693 aa).

The tr-type G domain occupies 8–282 (EKTRNIGIMA…AVIDYLPSPL (275 aa)). Residues 17–24 (AHVDAGKT), 81–85 (DTPGH), and 135–138 (NKMD) contribute to the GTP site.

The protein belongs to the TRAFAC class translation factor GTPase superfamily. Classic translation factor GTPase family. EF-G/EF-2 subfamily.

The protein resides in the cytoplasm. Functionally, catalyzes the GTP-dependent ribosomal translocation step during translation elongation. During this step, the ribosome changes from the pre-translocational (PRE) to the post-translocational (POST) state as the newly formed A-site-bound peptidyl-tRNA and P-site-bound deacylated tRNA move to the P and E sites, respectively. Catalyzes the coordinated movement of the two tRNA molecules, the mRNA and conformational changes in the ribosome. In Streptococcus gordonii (strain Challis / ATCC 35105 / BCRC 15272 / CH1 / DL1 / V288), this protein is Elongation factor G.